The chain runs to 413 residues: Serine/threonine-protein phosphatase 2A 55 kDa regulatory subunit B beta isoform (413 aa).

4 WD repeats span residues 1–31, 57–98, 141–179, and 190–230; these read EFNHTGELLATGDKGGRVVIFQREQESKNQV, EIEE…KRPE, AHTYHINSISVNSDYETYMSADDLRINLWNFEITNQSFN, and ELTE…LCDR. The residue at position 245 (Ser245) is a Phosphoserine. 3 WD repeats span residues 249-287, 304-345, and 380-412; these read EIISSISDVKFSHSGRYIMTRDYLTVKVWDLNMENRPIE, ENDC…DVTL, and DFSKKILHTAWHPSENIIAVAATNNLYIFQDKV. Tyr265 carries the phosphotyrosine modification. Thr268 carries the post-translational modification Phosphothreonine.

The protein belongs to the phosphatase 2A regulatory subunit B family. As to quaternary structure, PP2A consists of a common heterodimeric core enzyme, composed of a 36 kDa catalytic subunit (subunit C) and a 65 kDa constant regulatory subunit (PR65 or subunit A), that associates with a variety of regulatory subunits. Proteins that associate with the core dimer include three families of regulatory subunits B (the R2/B/PR55/B55, R3/B''/PR72/PR130/PR59 and R5/B'/B56 families), the 48 kDa variable regulatory subunit, viral proteins, and cell signaling molecules. Interacts with TOMM22. Interacts with IER5 (via N- and C-terminal regions). In terms of tissue distribution, brain.

The protein resides in the cytoplasm. Its subcellular location is the cytoskeleton. It localises to the membrane. The B regulatory subunit might modulate substrate selectivity and catalytic activity, and might also direct the localization of the catalytic enzyme to a particular subcellular compartment. This is Serine/threonine-protein phosphatase 2A 55 kDa regulatory subunit B beta isoform (PPP2R2B) from Oryctolagus cuniculus (Rabbit).